Consider the following 414-residue polypeptide: Acyltransferase MYCGRDRAFT_85486 (414 aa).

The segment covering 16-25 has biased composition (polar residues); it reads DGTSTVTIRP. Residues 16–47 form a disordered region; sequence DGTSTVTIRPTQKAAPSEEPSQDTAPSKKDSN. His-329 is a substrate binding site. Glu-367 functions as the Proton acceptor in the catalytic mechanism.

This sequence belongs to the lysine N-acyltransferase mbtK family.

It participates in siderophore biosynthesis. Functionally, acyltransferase; part of the gene cluster 14 that mediates the biosynthesis of a ferrichrome A-like siderophore which may contribute to organismal virulence. The first step of siderophore biosynthesis is performed by the HMG-CoA synthase (HMGS) MYCGRDRAFT_54740 which catalyzes the generation of HMG-CoA and CoA using acetoacetyl-CoA and acetyl-CoA as substrates. The enoyl-CoA isomerase/hydratase MYCGRDRAFT_76805 then catalyzes the conversion of HMG-CoA to methylglutaconyl-CoA. The acyltransferase MYCGRDRAFT_85486 then fuses methylglutaconyl-CoA with hydroxyornithine to yield methylglutaconyl hydroxyornithine. Methylglutaconyl hydroxyornithine is then available for use by the nonribosomal peptide synthetase NRPS2 to generate the ferrichrome A-like siderophore. The protein is Acyltransferase MYCGRDRAFT_85486 of Zymoseptoria tritici (strain CBS 115943 / IPO323) (Speckled leaf blotch fungus).